The primary structure comprises 154 residues: Insulin-like peptide 1 (154 aa).

Residues 1–29 (MFSQHNGAAVHGLRLQSLLIAAMLTAAMA) form the signal peptide. 3 cysteine pairs are disulfide-bonded: cysteine 49–cysteine 138, cysteine 61–cysteine 151, and cysteine 137–cysteine 142. Residues 72–92 (RESLLGNSDDDEDTEQEVQDD) form a disordered region. The propeptide at 73–122 (ESLLGNSDDDEDTEQEVQDDSSMWQTLDGAGYSFSPLLTNLYGSEVLIKM) is connecting peptide. The span at 79–91 (SDDDEDTEQEVQD) shows a compositional bias: acidic residues.

It belongs to the insulin family. Heterodimer of a B chain and an A chain linked by two disulfide bonds.

The protein resides in the secreted. Its function is as follows. Possible ligand of InR/insulin-like receptor. The sequence is that of Insulin-like peptide 1 from Drosophila melanogaster (Fruit fly).